The chain runs to 468 residues: tRNA threonylcarbamoyladenosine dehydratase (468 aa).

The next 3 helical transmembrane spans lie at phenylalanine 15–phenylalanine 35, asparagine 109–alanine 129, and isoleucine 315–leucine 335.

This sequence belongs to the HesA/MoeB/ThiF family.

It localises to the mitochondrion outer membrane. Its function is as follows. Catalyzes the ATP-dependent dehydration of threonylcarbamoyladenosine at position 37 (t(6)A37) to form cyclic t(6)A37 (ct(6)A37) in tRNAs that read codons beginning with adenine. The protein is tRNA threonylcarbamoyladenosine dehydratase (tcd1) of Schizosaccharomyces pombe (strain 972 / ATCC 24843) (Fission yeast).